The sequence spans 125 residues: Apolipoprotein C-IV (125 aa).

The first 27 residues, 1–27 (MSLLRQRLQALPVLCLCVLVLACIGAC), serve as a signal peptide directing secretion.

This sequence belongs to the apolipoprotein C4 family.

It is found in the secreted. In terms of biological role, may participate in lipoprotein metabolism. The sequence is that of Apolipoprotein C-IV (APOC4) from Plecturocebus moloch (Dusky titi monkey).